The chain runs to 1337 residues: C-Jun-amino-terminal kinase-interacting protein 3 (1337 aa).

The RH1 domain occupies 12 to 100; the sequence is VVVYQDDYCS…LTQYEREKAL (89 aa). The segment at 50–80 is kinesin-binding domain (KBD); essential for its function in axon elongation; it reads EVVKELMPLVVNVLENLDSVLSENQEHEVEL. The stretch at 58–177 forms a coiled coil; sequence LVVNVLENLD…HTEMIQTYVE (120 aa). Disordered stretches follow at residues 183–211 and 245–285; these read KMQQVGGSGQTESSLPGRSRKERPTSLNV and SSSY…PSAA. The segment covering 184–198 has biased composition (polar residues); that stretch reads MQQVGGSGQTESSLP. The JNK-binding domain (JBD); essential for its function in axon elongation stretch occupies residues 210–226; it reads NVFPLADGMVRAQMGGK. Low complexity predominate over residues 261–270; sequence SSAAATPSTT. Phosphothreonine; by MAPK occurs at positions 266, 276, and 287. A compositionally biased stretch (polar residues) spans 271 to 282; that stretch reads GTKSNTPTSSVP. Ser315 and Ser365 each carry phosphoserine; by ROCK1. Ser366 is modified (phosphoserine). Residues 424–459 are leucine zipper-like domain (LZ); essential for its function in axon elongation; sequence LLLENSQLLETKNALNVVKNDLIAKVDQLSGEQEVL. A coiled-coil region spans residues 437–555; it reads ALNVVKNDLI…LQEAVRWTEM (119 aa). Residues 459–515 form an interaction with NTRK2 region; that stretch reads LKGELEAAKQAKVKLENRIKELEEELKRVKSEAVTARREPREEVEDVSSYLCTELDK. Residues 521–595 form the RH2 domain; that stretch reads RRRFTRVEMA…SPPPAKRSYP (75 aa). Ser603 is modified (phosphoserine). The interval 633 to 655 is disordered; that stretch reads DDCTSSARREQKREQYRQVREHV. Over residues 639–655 the composition is skewed to basic and acidic residues; sequence ARREQKREQYRQVREHV. Ser677 carries the post-translational modification Phosphoserine. 2 disordered regions span residues 719–772 and 859–966; these read WKPH…ATSS and PRSN…TTTS. Over residues 739 to 765 the composition is skewed to basic and acidic residues; the sequence is LTCDREGEGEPKSTHPSPEKKKAKETP. Polar residues-rich tracts occupy residues 879 to 892 and 941 to 952; these read VATTANGKVNPSQS and ENGSESNGTIVQ.

This sequence belongs to the JIP scaffold family. In terms of assembly, forms homo- or heterooligomeric complexes. The central region of MAPK8IP3 interacts with the C-terminal of MAPK8IP2 but not MAPK8IP1. Binds specific components of the JNK signaling pathway namely MAPK8/JNK1, MAPK9/JNK2 and MAPK10/JNK3 to the N-terminal region, MAP2K4/MKK4 and MAP2K7/MKK7 to the central region and MAP3K11 to the C-terminal region. Binds the TPR motif-containing C-terminal of kinesin light chain, KLC1. Pre-assembled MAPK8IP1 scaffolding complexes are then transported as a cargo of kinesin, to the required subcellular location. Interacts with ROCK1 and this interaction is enhanced by ultraviolet-B (UVB) radiation. Interacts with SH3RF2. Interacts with NTRK2/TRKB and NTRK3/TRKC. In terms of processing, phosphorylation by ROCK1 is crucial for the recruitment of JNK. In terms of tissue distribution, highly expressed throughout many regions of the brain and at lower levels in the heart, liver, lung, testes and kidney. All isoforms have been identified in the brain, isoform 1a is also expressed in the spleen and lung.

Its subcellular location is the cytoplasm. The protein localises to the golgi apparatus. The protein resides in the cytoplasmic vesicle. It localises to the cell projection. It is found in the growth cone. Its subcellular location is the axon. The protein localises to the dendrite. The protein resides in the perinuclear region. Its function is as follows. The JNK-interacting protein (JIP) group of scaffold proteins selectively mediates JNK signaling by aggregating specific components of the MAPK cascade to form a functional JNK signaling module. May function as a regulator of vesicle transport, through interactions with the JNK-signaling components and motor proteins. Promotes neuronal axon elongation in a kinesin- and JNK-dependent manner. Activates cofilin at axon tips via local activation of JNK, thereby regulating filopodial dynamics and enhancing axon elongation. Its binding to kinesin heavy chains (KHC), promotes kinesin-1 motility along microtubules and is essential for axon elongation and regeneration. Regulates cortical neuronal migration by mediating NTRK2/TRKB anterograde axonal transport during brain development. Acts as an adapter that bridges the interaction between NTRK2/TRKB and KLC1 and drives NTRK2/TRKB axonal but not dendritic anterograde transport, which is essential for subsequent BDNF-triggered signaling and filopodia formation. The polypeptide is C-Jun-amino-terminal kinase-interacting protein 3 (Mapk8ip3) (Mus musculus (Mouse)).